The following is a 217-amino-acid chain: Pyrophosphatase PpaX (217 aa).

D11 serves as the catalytic Nucleophile.

It belongs to the HAD-like hydrolase superfamily. PpaX family. It depends on Mg(2+) as a cofactor.

The catalysed reaction is diphosphate + H2O = 2 phosphate + H(+). In terms of biological role, hydrolyzes pyrophosphate formed during P-Ser-HPr dephosphorylation by HPrK/P. Might play a role in controlling the intracellular pyrophosphate pool. This chain is Pyrophosphatase PpaX, found in Listeria monocytogenes serotype 4a (strain HCC23).